Reading from the N-terminus, the 422-residue chain is Mannose-1-phosphate guanylyltransferase regulatory subunit alpha-B (422 aa).

Positions L2–A253 are substrate-binding domain. Residues E85 and Q249 each contribute to the GDP-alpha-D-mannose site. Residues L275–L422 form a hexapeptide repeat domain region. The interval T358–I386 is C-loop.

It belongs to the transferase hexapeptide repeat family. Component of the GMPPA-GMPPB mannose-1-phosphate guanylyltransferase complex composed of 4 GMPPA subunits and 8 GMPPB subunits; the complex is organized into three layers, a central layer made up of 2 GMPPA dimers sandwiched between two layers each made up of 2 GMPPB dimers.

The protein operates within nucleotide-sugar biosynthesis; GDP-alpha-D-mannose biosynthesis; GDP-alpha-D-mannose from alpha-D-mannose 1-phosphate (GTP route): step 1/1. In terms of biological role, regulatory subunit of the GMPPA-GMPPB mannose-1-phosphate guanylyltransferase complex; reduces the catalytic activity of GMPPB when part of the complex. Mediates allosteric feedback inhibition of GMPPB catalytic activity upon binding GDP-alpha-D-mannose. Together with GMPPB regulates GDP-alpha-D-mannose levels. One of two paralogs (gmppaa and gmppab) that may have redundant functions. The sequence is that of Mannose-1-phosphate guanylyltransferase regulatory subunit alpha-B (gmppab) from Danio rerio (Zebrafish).